We begin with the raw amino-acid sequence, 390 residues long: MNGTRNWCTLVDVHPEGQTAGSVDVLRLTLQSELTGDELERIAQKAGRKTYAMVSSHSTSHSLASELVESNDGHEEIIKVYLKGRSGDKMIHEKNINQLKSEVQYIQEARNCLQKLREDISSKLDRDPGDSVHKQEIQVVLEKQNGLSEGPLTTYSSPPEVDTHINEDVESLRKTVQDLLVKLQEAEQQHQSDCSAFKVTLSQYQREAKQSQVALQRAEDRAEQKEAEVGELQRRLQGMETEYQAILAKVREGETALEELRSKNVDCQAEQEKAANLEKEVAGLREKIHHLDDMLKSQQRKVRQMIEQLQNSKAVIQSKDTTIQELKEKIAYLEAENLEMHDRMEHLIEKQISHGNFSTQNRAKTENLGSIRISKPPSPKPMPLIRVVET.

Coiled coils occupy residues 88 to 126 (DKMIHEKNINQLKSEVQYIQEARNCLQKLREDISSKLDR) and 162 to 351 (DTHI…IEKQ). The residue at position 171 (S171) is a Phosphoserine.

The protein belongs to the tuftelin family. As to quaternary structure, interacts with TFIP11. In terms of tissue distribution, present in the extracellular enamel and is mainly associated with the crystal component.

The protein localises to the secreted. Its function is as follows. Involved in the structural organization of the epidermis. Involved in the mineralization and structural organization of enamel. The polypeptide is Tuftelin (TUFT1) (Bos taurus (Bovine)).